Here is an 81-residue protein sequence, read N- to C-terminus: ATP synthase subunit c (81 aa).

Helical transmembrane passes span 7-27 (AASV…PGIG) and 57-77 (LAFM…LLFA).

It belongs to the ATPase C chain family. In terms of assembly, F-type ATPases have 2 components, F(1) - the catalytic core - and F(0) - the membrane proton channel. F(1) has five subunits: alpha(3), beta(3), gamma(1), delta(1), epsilon(1). F(0) has four main subunits: a(1), b(1), b'(1) and c(10-14). The alpha and beta chains form an alternating ring which encloses part of the gamma chain. F(1) is attached to F(0) by a central stalk formed by the gamma and epsilon chains, while a peripheral stalk is formed by the delta, b and b' chains.

It is found in the cellular thylakoid membrane. Its function is as follows. F(1)F(0) ATP synthase produces ATP from ADP in the presence of a proton or sodium gradient. F-type ATPases consist of two structural domains, F(1) containing the extramembraneous catalytic core and F(0) containing the membrane proton channel, linked together by a central stalk and a peripheral stalk. During catalysis, ATP synthesis in the catalytic domain of F(1) is coupled via a rotary mechanism of the central stalk subunits to proton translocation. Key component of the F(0) channel; it plays a direct role in translocation across the membrane. A homomeric c-ring of between 10-14 subunits forms the central stalk rotor element with the F(1) delta and epsilon subunits. The sequence is that of ATP synthase subunit c from Synechococcus sp. (strain CC9902).